The chain runs to 82 residues: DNA-directed RNA polymerase subunit Rpo5 (82 aa).

This sequence belongs to the archaeal Rpo5/eukaryotic RPB5 RNA polymerase subunit family. Part of the RNA polymerase complex.

The protein resides in the cytoplasm. The catalysed reaction is RNA(n) + a ribonucleoside 5'-triphosphate = RNA(n+1) + diphosphate. Its function is as follows. DNA-dependent RNA polymerase (RNAP) catalyzes the transcription of DNA into RNA using the four ribonucleoside triphosphates as substrates. The protein is DNA-directed RNA polymerase subunit Rpo5 of Pyrococcus horikoshii (strain ATCC 700860 / DSM 12428 / JCM 9974 / NBRC 100139 / OT-3).